Consider the following 85-residue polypeptide: Large ribosomal subunit protein bL27 (85 aa).

The interval Met1 to Gly22 is disordered. A compositionally biased stretch (polar residues) spans Ala7–Gln19.

It belongs to the bacterial ribosomal protein bL27 family.

The sequence is that of Large ribosomal subunit protein bL27 (rpmA) from Streptomyces griseus.